Here is a 203-residue protein sequence, read N- to C-terminus: E3 ubiquitin-protein ligase rnf152-A (203 aa).

Residues 12-55 (CQICFNYYSPRRRPKLLDCKRTCCSVCLQQMRACQKDLRCPWCR) form an RING-type; degenerate zinc finger. Residues 167–187 (SGICTVILVACVLVFLLGIVL) form a helical membrane-spanning segment.

This sequence belongs to the RNF152 family.

It is found in the lysosome membrane. It carries out the reaction S-ubiquitinyl-[E2 ubiquitin-conjugating enzyme]-L-cysteine + [acceptor protein]-L-lysine = [E2 ubiquitin-conjugating enzyme]-L-cysteine + N(6)-ubiquitinyl-[acceptor protein]-L-lysine.. It participates in protein modification; protein ubiquitination. E3 ubiquitin-protein ligase that acts as a negative regulator of mTORC1 signaling by mediating ubiquitination of RagA/RRAGA and RHEB. Catalyzes 'Lys-63'-linked polyubiquitination of RagA/RRAGA in response to amino acid starvation, thereby regulating mTORC1 signaling. Also mediates monoubiquitination of RHEB, promoting its association with the TSC-TBC complex and subsequent inhibition. Also mediates 'Lys-48'-linked polyubiquitination of target proteins and their subsequent targeting to the proteasome for degradation. The chain is E3 ubiquitin-protein ligase rnf152-A from Xenopus laevis (African clawed frog).